We begin with the raw amino-acid sequence, 175 residues long: Large ribosomal subunit protein uL16 (175 aa).

It belongs to the universal ribosomal protein uL16 family.

The sequence is that of Large ribosomal subunit protein uL16 from Metallosphaera sedula (strain ATCC 51363 / DSM 5348 / JCM 9185 / NBRC 15509 / TH2).